Consider the following 75-residue polypeptide: MRLVVCLVFLASFALVCQGQGYKGPYTRPILRPYVRPVVSYNACTLSCRGITTTQARSCCTRLGRCCHVAKGYSG.

Positions 1–19 (MRLVVCLVFLASFALVCQG) are cleaved as a signal peptide. The residue at position 20 (Q20) is a Pyrrolidone carboxylic acid. 3 disulfide bridges follow: C44-C59, C48-C66, and C60-C67. S74 is modified (serine amide).

Belongs to the penaeidin family.

It is found in the cytoplasmic granule. Its function is as follows. Antibacterial and antifungal activity. Presents chitin-binding activity. This Penaeus setiferus (Atlantic white shrimp) protein is Penaeidin-3k.